The chain runs to 89 residues: Small ribosomal subunit protein uS17 (89 aa).

This sequence belongs to the universal ribosomal protein uS17 family. Part of the 30S ribosomal subunit.

In terms of biological role, one of the primary rRNA binding proteins, it binds specifically to the 5'-end of 16S ribosomal RNA. The polypeptide is Small ribosomal subunit protein uS17 (Novosphingobium aromaticivorans (strain ATCC 700278 / DSM 12444 / CCUG 56034 / CIP 105152 / NBRC 16084 / F199)).